Consider the following 375-residue polypeptide: Putrescine N-methyltransferase 1 (375 aa).

2 stretches are compositionally biased toward polar residues: residues 24–50 and 57–77; these read HQNGTSEHLNGYQNGTSKHQNGHQNGT and HQNGTSEQQNGTISHDNGNEL. A disordered region spans residues 24–77; that stretch reads HQNGTSEHLNGYQNGTSKHQNGHQNGTFEHRNGHQNGTSEQQNGTISHDNGNEL. A PABS domain is found at 86–323; the sequence is PGWFSEFSAL…GVIGYMLCST (238 aa). S-adenosyl-L-methionine-binding positions include Gln-117, Glu-192, and 223–224; that span reads DG. The Proton acceptor role is filled by Asp-242. S-adenosyl-L-methionine is bound at residue Tyr-311.

It belongs to the class I-like SAM-binding methyltransferase superfamily. Putrescine methyltransferase family. As to expression, predominantly expressed in roots.

It catalyses the reaction putrescine + S-adenosyl-L-methionine = N-methylputrescine + S-adenosyl-L-homocysteine + H(+). Its pathway is alkaloid biosynthesis; nicotine biosynthesis. Functionally, involved in the biosynthesis of pyridine alkaloid natural products, leading mainly to the production of anabasine, anatabine, nicotine and nornicotine, effective deterrents against herbivores with antiparasitic and pesticide properties (neurotoxins); nornicotine serves as the precursor in the synthesis of the carcinogen compound N'-nitrosonornicotine (NNN). Methyltransferase that mediates the conversion of putrescine to N-methylputrescine. Promotes leaves ripening. The sequence is that of Putrescine N-methyltransferase 1 from Nicotiana tabacum (Common tobacco).